The following is a 152-amino-acid chain: Ribosome maturation factor RimP (152 aa).

Belongs to the RimP family.

It is found in the cytoplasm. In terms of biological role, required for maturation of 30S ribosomal subunits. The polypeptide is Ribosome maturation factor RimP (Idiomarina loihiensis (strain ATCC BAA-735 / DSM 15497 / L2-TR)).